Reading from the N-terminus, the 93-residue chain is uncharacterized protein (93 aa).

Transmembrane regions (helical) follow at residues 8 to 28 (FIGIVKDILVLIASFGILLAS) and 54 to 74 (ACFLIFIALGETLLAFVYLIL).

The protein resides in the cell membrane. This is an uncharacterized protein from Methanocaldococcus jannaschii (strain ATCC 43067 / DSM 2661 / JAL-1 / JCM 10045 / NBRC 100440) (Methanococcus jannaschii).